Reading from the N-terminus, the 83-residue chain is Urotensin-2 (83 aa).

Residues 49-71 constitute a propeptide that is removed on maturation; it reads EVLLEKQSLLNPFSRVFGIRKQF. The cysteines at positions 77 and 82 are disulfide-linked.

It belongs to the urotensin-2 family.

The protein resides in the secreted. Functionally, urotensin is found in the teleost caudal neurosecretory system. It has a suggested role in osmoregulation and as a corticotropin-releasing factor. The non-hormonal portion of this precursor may be a urotensin binding protein, urophysin. The sequence is that of Urotensin-2 from Platichthys flesus (European flounder).